The following is a 311-amino-acid chain: tRNA (guanine-N(7)-)-methyltransferase (311 aa).

Residues glutamate 28, glutamate 53, and aspartate 103 each coordinate S-adenosyl-L-methionine. The active site involves aspartate 103. Positions 107 and 139 each coordinate substrate.

This sequence belongs to the class I-like SAM-binding methyltransferase superfamily. TrmB family.

It catalyses the reaction guanosine(46) in tRNA + S-adenosyl-L-methionine = N(7)-methylguanosine(46) in tRNA + S-adenosyl-L-homocysteine. The protein operates within tRNA modification; N(7)-methylguanine-tRNA biosynthesis. Its function is as follows. Catalyzes the formation of N(7)-methylguanine at position 46 (m7G46) in tRNA. The protein is tRNA (guanine-N(7)-)-methyltransferase of Thermus thermophilus (strain ATCC BAA-163 / DSM 7039 / HB27).